The chain runs to 353 residues: Uroporphyrinogen decarboxylase (353 aa).

Substrate-binding positions include 26–30 (RQAGR), Asp75, Tyr161, Ser216, and His332.

It belongs to the uroporphyrinogen decarboxylase family. As to quaternary structure, homodimer.

It localises to the cytoplasm. The enzyme catalyses uroporphyrinogen III + 4 H(+) = coproporphyrinogen III + 4 CO2. It functions in the pathway porphyrin-containing compound metabolism; protoporphyrin-IX biosynthesis; coproporphyrinogen-III from 5-aminolevulinate: step 4/4. Its function is as follows. Catalyzes the decarboxylation of four acetate groups of uroporphyrinogen-III to yield coproporphyrinogen-III. In Gluconacetobacter diazotrophicus (strain ATCC 49037 / DSM 5601 / CCUG 37298 / CIP 103539 / LMG 7603 / PAl5), this protein is Uroporphyrinogen decarboxylase.